Consider the following 597-residue polypeptide: Leishmanolysin (597 aa).

A signal peptide spans 1-39 (MSVDSSSTHRHRCVAARLVPLAAAGAAVTVAVGTAAAWA). Residues 40 to 99 (HAGAVQHRCIHDAMQARVRQSVAAQRMAPSAVSAVGLPHVTLDAGNTAAGADPSTGTANV) constitute a propeptide, activation peptide. Disulfide bonds link Cys124–Cys141 and Cys190–Cys229. His263 is a binding site for Zn(2+). The active site involves Glu264. Residue His267 coordinates Zn(2+). An N-linked (GlcNAc...) asparagine glycan is attached at Asn299. 7 disulfides stabilise this stretch: Cys313-Cys383, Cys390-Cys452, Cys403-Cys422, Cys412-Cys486, Cys463-Cys507, Cys512-Cys562, and Cys532-Cys555. His332 contacts Zn(2+). Residue Asn404 is glycosylated (N-linked (GlcNAc...) asparagine). A lipid anchor (GPI-anchor amidated asparagine) is attached at Asn574. Residues 575–597 (AAGRRGPRAATALVVAALLAVAL) constitute a propeptide, removed in mature form.

It belongs to the peptidase M8 family. Zn(2+) is required as a cofactor.

The protein localises to the cell membrane. The enzyme catalyses Preference for hydrophobic residues at P1 and P1' and basic residues at P2' and P3'. A model nonapeptide is cleaved at -Ala-Tyr-|-Leu-Lys-Lys-.. Has an integral role during the infection of macrophages in the mammalian host. This Leishmania amazonensis protein is Leishmanolysin (gp63).